The sequence spans 252 residues: Protein lin-28 homolog B (252 aa).

Residues 1–30 (MAEGGAARGTREEQGKLPEQEEEEEEDPQV) are disordered. Basic and acidic residues predominate over residues 9 to 19 (GTREEQGKLPE). The CSD domain occupies 32–105 (LGSGHCKWFN…GFESLRVTGP (74 aa)). CCHC-type zinc fingers lie at residues 130-147 (DRCY…ECNL) and 152-169 (KKCH…NCPH). Positions 132, 135, 140, 145, 154, 157, 162, and 167 each coordinate Zn(2+). Residues 172–252 (VPQHPTTSQG…KGPSVQKKKK (81 aa)) form a disordered region. A compositionally biased stretch (basic and acidic residues) spans 213–222 (GRSELSERSS). Over residues 225–238 (PQEASLSKISTSPE) the composition is skewed to polar residues.

This sequence belongs to the lin-28 family.

It localises to the nucleus. It is found in the nucleolus. Functionally, suppressor of specific microRNA (miRNA) biogenesis. Binds target primary miRNA transcripts and sequester them in the nucleolus, away from the microprocessor complex, hence preventing their processing into mature miRNA. The specific interaction with target pri-miRNAs occurs via an 5'-GGAG-3' motif in the pre-miRNA terminal loop. This chain is Protein lin-28 homolog B (lin28b), found in Xenopus laevis (African clawed frog).